Here is a 524-residue protein sequence, read N- to C-terminus: Chromosomal replication initiator protein DnaA (524 aa).

The tract at residues 1 to 85 (MSQNSSSLLE…TRVLSLRMGR (85 aa)) is domain I, interacts with DnaA modulators. A domain II region spans residues 85 to 182 (RSFSLAVSVE…TPAHNPNREV (98 aa)). Residues 95–183 (PEQEIPETPA…PAHNPNREVS (89 aa)) are disordered. Over residues 148–158 (APEPHPAPIAD) the composition is skewed to pro residues. Positions 183–399 (SLNPKYTFES…GALIRVSAYS (217 aa)) are domain III, AAA+ region. ATP-binding residues include G227, G229, K230, and T231. Residues 400-524 (SLINQPIDKE…TQLIKSRGRN (125 aa)) are domain IV, binds dsDNA.

The protein belongs to the DnaA family. In terms of assembly, oligomerizes as a right-handed, spiral filament on DNA at oriC.

The protein resides in the cytoplasm. Its function is as follows. Plays an essential role in the initiation and regulation of chromosomal replication. ATP-DnaA binds to the origin of replication (oriC) to initiate formation of the DNA replication initiation complex once per cell cycle. Binds the DnaA box (a 9 base pair repeat at the origin) and separates the double-stranded (ds)DNA. Forms a right-handed helical filament on oriC DNA; dsDNA binds to the exterior of the filament while single-stranded (ss)DNA is stabiized in the filament's interior. The ATP-DnaA-oriC complex binds and stabilizes one strand of the AT-rich DNA unwinding element (DUE), permitting loading of DNA polymerase. After initiation quickly degrades to an ADP-DnaA complex that is not apt for DNA replication. Binds acidic phospholipids. This chain is Chromosomal replication initiator protein DnaA, found in Corynebacterium glutamicum (strain ATCC 13032 / DSM 20300 / JCM 1318 / BCRC 11384 / CCUG 27702 / LMG 3730 / NBRC 12168 / NCIMB 10025 / NRRL B-2784 / 534).